A 367-amino-acid chain; its full sequence is DNA replication and repair protein RecF (367 aa).

An ATP-binding site is contributed by 30–37 (GANGSGKT).

The protein belongs to the RecF family.

The protein resides in the cytoplasm. Its function is as follows. The RecF protein is involved in DNA metabolism; it is required for DNA replication and normal SOS inducibility. RecF binds preferentially to single-stranded, linear DNA. It also seems to bind ATP. This is DNA replication and repair protein RecF from Pseudomonas putida (strain GB-1).